Here is a 315-residue protein sequence, read N- to C-terminus: Glutamyl-Q tRNA(Asp) synthetase (315 aa).

L-glutamate-binding positions include 23-27 (RFAPS) and Glu-59. Residues 26 to 36 (PSPTGPLHIGS) carry the 'HIGH' region motif. Positions 115, 117, 142, and 146 each coordinate Zn(2+). Residues Tyr-202 and Arg-220 each contribute to the L-glutamate site. The 'KMSKS' region motif lies at 258–262 (KLSKQ). Lys-261 is a binding site for ATP.

Belongs to the class-I aminoacyl-tRNA synthetase family. GluQ subfamily. The cofactor is Zn(2+).

Catalyzes the tRNA-independent activation of glutamate in presence of ATP and the subsequent transfer of glutamate onto a tRNA(Asp). Glutamate is transferred on the 2-amino-5-(4,5-dihydroxy-2-cyclopenten-1-yl) moiety of the queuosine in the wobble position of the QUC anticodon. The protein is Glutamyl-Q tRNA(Asp) synthetase of Ralstonia nicotianae (strain ATCC BAA-1114 / GMI1000) (Ralstonia solanacearum).